We begin with the raw amino-acid sequence, 156 residues long: MTIHHDLSPTLNLIRLANGEGLDLPAYESKGAAGMDLRAAVDEAAPLTLLPGKRALVPTGFIFEIPEGFEGQVRPRSGLAFKNGITCLNSPGTVDSDYRGEVKVLLANLGEEAFVISRGMRIAQMVIAPVTQMRVAEITEASETMRGAGGFGSTGV.

Substrate contacts are provided by residues arginine 76–glycine 78, asparagine 89, threonine 93–aspartate 95, and lysine 103.

This sequence belongs to the dUTPase family. Mg(2+) is required as a cofactor.

The enzyme catalyses dUTP + H2O = dUMP + diphosphate + H(+). It functions in the pathway pyrimidine metabolism; dUMP biosynthesis; dUMP from dCTP (dUTP route): step 2/2. This enzyme is involved in nucleotide metabolism: it produces dUMP, the immediate precursor of thymidine nucleotides and it decreases the intracellular concentration of dUTP so that uracil cannot be incorporated into DNA. In Rhizobium johnstonii (strain DSM 114642 / LMG 32736 / 3841) (Rhizobium leguminosarum bv. viciae), this protein is Deoxyuridine 5'-triphosphate nucleotidohydrolase.